We begin with the raw amino-acid sequence, 365 residues long: Histidinol-phosphate aminotransferase (365 aa).

A disordered region spans residues 1–22 (MSRPVPNPGILDIAPYTPGKSP). K221 is modified (N6-(pyridoxal phosphate)lysine).

Belongs to the class-II pyridoxal-phosphate-dependent aminotransferase family. Histidinol-phosphate aminotransferase subfamily. As to quaternary structure, homodimer. Pyridoxal 5'-phosphate is required as a cofactor.

The enzyme catalyses L-histidinol phosphate + 2-oxoglutarate = 3-(imidazol-4-yl)-2-oxopropyl phosphate + L-glutamate. It functions in the pathway amino-acid biosynthesis; L-histidine biosynthesis; L-histidine from 5-phospho-alpha-D-ribose 1-diphosphate: step 7/9. The sequence is that of Histidinol-phosphate aminotransferase from Nitrobacter winogradskyi (strain ATCC 25391 / DSM 10237 / CIP 104748 / NCIMB 11846 / Nb-255).